Here is a 346-residue protein sequence, read N- to C-terminus: 4-hydroxy-3-methylbut-2-enyl diphosphate reductase (346 aa).

C19 contacts [4Fe-4S] cluster. (2E)-4-hydroxy-3-methylbut-2-enyl diphosphate contacts are provided by H48 and H84. 2 residues coordinate dimethylallyl diphosphate: H48 and H84. Positions 48 and 84 each coordinate isopentenyl diphosphate. Residue C106 participates in [4Fe-4S] cluster binding. H134 provides a ligand contact to (2E)-4-hydroxy-3-methylbut-2-enyl diphosphate. H134 serves as a coordination point for dimethylallyl diphosphate. H134 lines the isopentenyl diphosphate pocket. Residue E136 is the Proton donor of the active site. T175 provides a ligand contact to (2E)-4-hydroxy-3-methylbut-2-enyl diphosphate. C205 is a [4Fe-4S] cluster binding site. Positions 233, 234, 235, and 278 each coordinate (2E)-4-hydroxy-3-methylbut-2-enyl diphosphate. The dimethylallyl diphosphate site is built by S233, S234, N235, and S278. Isopentenyl diphosphate-binding residues include S233, S234, N235, and S278.

This sequence belongs to the IspH family. The cofactor is [4Fe-4S] cluster.

It carries out the reaction isopentenyl diphosphate + 2 oxidized [2Fe-2S]-[ferredoxin] + H2O = (2E)-4-hydroxy-3-methylbut-2-enyl diphosphate + 2 reduced [2Fe-2S]-[ferredoxin] + 2 H(+). It catalyses the reaction dimethylallyl diphosphate + 2 oxidized [2Fe-2S]-[ferredoxin] + H2O = (2E)-4-hydroxy-3-methylbut-2-enyl diphosphate + 2 reduced [2Fe-2S]-[ferredoxin] + 2 H(+). Its pathway is isoprenoid biosynthesis; dimethylallyl diphosphate biosynthesis; dimethylallyl diphosphate from (2E)-4-hydroxy-3-methylbutenyl diphosphate: step 1/1. The protein operates within isoprenoid biosynthesis; isopentenyl diphosphate biosynthesis via DXP pathway; isopentenyl diphosphate from 1-deoxy-D-xylulose 5-phosphate: step 6/6. Functionally, catalyzes the conversion of 1-hydroxy-2-methyl-2-(E)-butenyl 4-diphosphate (HMBPP) into a mixture of isopentenyl diphosphate (IPP) and dimethylallyl diphosphate (DMAPP). Acts in the terminal step of the DOXP/MEP pathway for isoprenoid precursor biosynthesis. This Brucella suis biovar 1 (strain 1330) protein is 4-hydroxy-3-methylbut-2-enyl diphosphate reductase.